The sequence spans 511 residues: Bifunctional purine biosynthesis protein PurH (511 aa).

The MGS-like domain maps to 1 to 145 (MKKRALVSVS…KNHKFVSVIV (145 aa)).

It belongs to the PurH family.

The enzyme catalyses (6R)-10-formyltetrahydrofolate + 5-amino-1-(5-phospho-beta-D-ribosyl)imidazole-4-carboxamide = 5-formamido-1-(5-phospho-D-ribosyl)imidazole-4-carboxamide + (6S)-5,6,7,8-tetrahydrofolate. The catalysed reaction is IMP + H2O = 5-formamido-1-(5-phospho-D-ribosyl)imidazole-4-carboxamide. It functions in the pathway purine metabolism; IMP biosynthesis via de novo pathway; 5-formamido-1-(5-phospho-D-ribosyl)imidazole-4-carboxamide from 5-amino-1-(5-phospho-D-ribosyl)imidazole-4-carboxamide (10-formyl THF route): step 1/1. It participates in purine metabolism; IMP biosynthesis via de novo pathway; IMP from 5-formamido-1-(5-phospho-D-ribosyl)imidazole-4-carboxamide: step 1/1. This Bacillus cereus (strain ATCC 10987 / NRS 248) protein is Bifunctional purine biosynthesis protein PurH.